Here is a 128-residue protein sequence, read N- to C-terminus: Fluoride-specific ion channel FluC (128 aa).

4 consecutive transmembrane segments (helical) span residues 4 to 24 (VFLL…VSTW), 35 to 55 (FGIL…WSIA), 67 to 87 (FLFT…LDTM), and 99 to 119 (LLNV…GIIL). Na(+) contacts are provided by glycine 74 and threonine 77.

This sequence belongs to the fluoride channel Fluc/FEX (TC 1.A.43) family.

The protein resides in the cell inner membrane. The enzyme catalyses fluoride(in) = fluoride(out). With respect to regulation, na(+) is not transported, but it plays an essential structural role and its presence is essential for fluoride channel function. Functionally, fluoride-specific ion channel. Important for reducing fluoride concentration in the cell, thus reducing its toxicity. The chain is Fluoride-specific ion channel FluC from Parabacteroides distasonis (strain ATCC 8503 / DSM 20701 / CIP 104284 / JCM 5825 / NCTC 11152).